The sequence spans 66 residues: Large ribosomal subunit protein bL35 (66 aa).

The span at 1-46 (MPKMKTHRASAKRFKRTGNGGLKRHHAFTGHRFHGKTKKQRRHLRK) shows a compositional bias: basic residues. Residues 1–50 (MPKMKTHRASAKRFKRTGNGGLKRHHAFTGHRFHGKTKKQRRHLRKAAMV) are disordered.

It belongs to the bacterial ribosomal protein bL35 family.

The protein is Large ribosomal subunit protein bL35 of Lactobacillus delbrueckii subsp. bulgaricus (strain ATCC 11842 / DSM 20081 / BCRC 10696 / JCM 1002 / NBRC 13953 / NCIMB 11778 / NCTC 12712 / WDCM 00102 / Lb 14).